We begin with the raw amino-acid sequence, 471 residues long: tRNA-2-methylthio-N(6)-dimethylallyladenosine synthase (471 aa).

Residues 33-151 enclose the MTTase N-terminal domain; the sequence is KKYMITTYGC…FPELLSRSME (119 aa). [4Fe-4S] cluster-binding residues include cysteine 42, cysteine 78, cysteine 112, cysteine 188, cysteine 192, and cysteine 195. A Radical SAM core domain is found at 174-404; sequence RKYDLKGFIN…LDKVNEISAE (231 aa). The TRAM domain maps to 407-470; it reads QSYLNKVVEV…TFSLNGEVIQ (64 aa).

It belongs to the methylthiotransferase family. MiaB subfamily. As to quaternary structure, monomer. It depends on [4Fe-4S] cluster as a cofactor.

The protein localises to the cytoplasm. The catalysed reaction is N(6)-dimethylallyladenosine(37) in tRNA + (sulfur carrier)-SH + AH2 + 2 S-adenosyl-L-methionine = 2-methylsulfanyl-N(6)-dimethylallyladenosine(37) in tRNA + (sulfur carrier)-H + 5'-deoxyadenosine + L-methionine + A + S-adenosyl-L-homocysteine + 2 H(+). Its function is as follows. Catalyzes the methylthiolation of N6-(dimethylallyl)adenosine (i(6)A), leading to the formation of 2-methylthio-N6-(dimethylallyl)adenosine (ms(2)i(6)A) at position 37 in tRNAs that read codons beginning with uridine. In Alkaliphilus oremlandii (strain OhILAs) (Clostridium oremlandii (strain OhILAs)), this protein is tRNA-2-methylthio-N(6)-dimethylallyladenosine synthase.